An 865-amino-acid polypeptide reads, in one-letter code: Ribosome biogenesis protein BOP1 homolog (865 aa).

Disordered stretches follow at residues Met1–Gly195 and Lys207–Ile240. 3 stretches are compositionally biased toward acidic residues: residues Leu30–Tyr44, Asn57–Leu79, and Asp87–Ala159. A compositionally biased stretch (basic and acidic residues) spans Lys160 to Gln180. WD repeat units follow at residues Gly526–Thr565, Pro567–Val607, Thr651–Pro693, Lys696–Lys734, Pro737–Gln776, Ile780–Gln819, and Val835–Thr865.

It belongs to the WD repeat BOP1/ERB1 family.

It is found in the nucleus. Its subcellular location is the nucleolus. It localises to the nucleoplasm. Required for maturation of ribosomal RNAs and formation of the large ribosomal subunit. In Anopheles gambiae (African malaria mosquito), this protein is Ribosome biogenesis protein BOP1 homolog.